A 107-amino-acid chain; its full sequence is MKNLGNLMKQAQQMQSKMAEMQATMAEMEVTGSSGAGMLQVTLNGKYELKKVKIDPSLVDPSDVEVLEDLILAAFNDAKAKAEAAMAEEMAKMTGGLNLPPGFKLPF.

This sequence belongs to the YbaB/EbfC family. As to quaternary structure, homodimer.

The protein localises to the cytoplasm. Its subcellular location is the nucleoid. In terms of biological role, binds to DNA and alters its conformation. May be involved in regulation of gene expression, nucleoid organization and DNA protection. This Paramagnetospirillum magneticum (strain ATCC 700264 / AMB-1) (Magnetospirillum magneticum) protein is Nucleoid-associated protein amb4104.